Reading from the N-terminus, the 35-residue chain is MSDIN-like toxin proprotein 8 (35 aa).

Residues 1–10 (MSDINATRLP) constitute a propeptide that is removed on maturation. The segment at residues 11-18 (FVFVASPP) is a cross-link (cyclopeptide (Phe-Pro)). Residues 19-35 (CVGDDIAMVLTRGENLC) constitute a propeptide that is removed on maturation.

It belongs to the MSDIN fungal toxin family. In terms of processing, processed by the macrocyclase-peptidase enzyme POPB to yield a toxic cyclic octapeptide. POPB first removes 10 residues from the N-terminus. Conformational trapping of the remaining peptide forces the enzyme to release this intermediate rather than proceed to macrocyclization. The enzyme rebinds the remaining peptide in a different conformation and catalyzes macrocyclization of the N-terminal 8 residues. In terms of tissue distribution, expressed in basidiocarps.

Functionally, probable toxin that belongs to the MSDIN-like toxin family responsible for a large number of food poisoning cases and deaths. The protein is MSDIN-like toxin proprotein 8 of Amanita exitialis (Guangzhou destroying angel).